The following is a 283-amino-acid chain: Shikimate dehydrogenase (NADP(+)) (283 aa).

Shikimate-binding positions include serine 18 to serine 20 and threonine 66. Lysine 70 serves as the catalytic Proton acceptor. Residues asparagine 91 and aspartate 106 each coordinate shikimate. Residues glycine 130 to alanine 134 and methionine 225 contribute to the NADP(+) site. Tyrosine 227 provides a ligand contact to shikimate. Glycine 248 is a binding site for NADP(+).

It belongs to the shikimate dehydrogenase family. In terms of assembly, homodimer.

The enzyme catalyses shikimate + NADP(+) = 3-dehydroshikimate + NADPH + H(+). The protein operates within metabolic intermediate biosynthesis; chorismate biosynthesis; chorismate from D-erythrose 4-phosphate and phosphoenolpyruvate: step 4/7. In terms of biological role, involved in the biosynthesis of the chorismate, which leads to the biosynthesis of aromatic amino acids. Catalyzes the reversible NADPH linked reduction of 3-dehydroshikimate (DHSA) to yield shikimate (SA). The sequence is that of Shikimate dehydrogenase (NADP(+)) from Pelodictyon phaeoclathratiforme (strain DSM 5477 / BU-1).